Reading from the N-terminus, the 189-residue chain is UPF0398 protein LVIS_0849 (189 aa).

This sequence belongs to the UPF0398 family.

This is UPF0398 protein LVIS_0849 from Levilactobacillus brevis (strain ATCC 367 / BCRC 12310 / CIP 105137 / JCM 1170 / LMG 11437 / NCIMB 947 / NCTC 947) (Lactobacillus brevis).